The chain runs to 387 residues: Putative odorant receptor 19b (387 aa).

Residues 1–40 (MDISKVDSTRALVNHWRIFRIMGIHPPGKRTFWGRHYTAY) lie on the Cytoplasmic side of the membrane. The helical transmembrane segment at 41–61 (SMVWNVTFHICIWVSFSVNLL) threads the bilayer. The Extracellular portion of the chain corresponds to 62-71 (QSNSLETFCE). Residues 72–92 (SLCVTMPHTLYMLKLINVRRM) traverse the membrane as a helical segment. Residues 93–127 (RGEMISSHWLLRLLDKRLGCADERQIIMAGIERAE) lie on the Cytoplasmic side of the membrane. A helical transmembrane segment spans residues 128-148 (FIFRTIFRGLACTVVLGIIYI). Residues 149 to 171 (SASSEPTLMYPTWIPWNWKDSTS) are Extracellular-facing. Residues 172–192 (AYLATAMLHTTALMANATLVL) traverse the membrane as a helical segment. The Cytoplasmic portion of the chain corresponds to 193 to 254 (NLSSYPGTYL…LRLFKSLERS (62 aa)). A helical membrane pass occupies residues 255–275 (LSMTCFLQFFSTACAQCTICY). Residues 276-285 (FLLFGNVGIM) are Extracellular-facing. A helical membrane pass occupies residues 286 to 306 (RFMNMLFLLVILTTETLLLCY). Topologically, residues 307–336 (TAELPCKEGESLLTAVYSCNWLSQSVNFRR) are cytoplasmic. The helical transmembrane segment at 337 to 357 (LLLLMLARCQIPMILVSGVIV) threads the bilayer. The Extracellular portion of the chain corresponds to 358–387 (PISMKTFTVMIKGAYTMLTLLNEIRKTSLE).

The protein belongs to the insect chemoreceptor superfamily. Heteromeric odorant receptor channel (TC 1.A.69) family. Or2a subfamily. In terms of assembly, interacts with Orco. Complexes exist early in the endomembrane system in olfactory sensory neurons (OSNs), coupling these complexes to the conserved ciliary trafficking pathway.

The protein localises to the cell membrane. Odorant receptor which mediates acceptance or avoidance behavior, depending on its substrates. The odorant receptor repertoire encodes a large collection of odor stimuli that vary widely in identity, intensity, and duration. May form a complex with Orco to form odorant-sensing units, providing sensitive and prolonged odorant signaling and calcium permeability. The chain is Putative odorant receptor 19b from Drosophila melanogaster (Fruit fly).